A 251-amino-acid chain; its full sequence is Large ribosomal subunit protein uL3 (251 aa).

N5-methylglutamine is present on glutamine 151. The disordered stretch occupies residues 219–251 (PGAFRRNGEEAAAAPAAEAPAETPAEEAGQEGA). Low complexity predominate over residues 228–241 (EAAAAPAAEAPAET). Over residues 242-251 (PAEEAGQEGA) the composition is skewed to acidic residues.

It belongs to the universal ribosomal protein uL3 family. As to quaternary structure, part of the 50S ribosomal subunit. Forms a cluster with proteins L14 and L19. Methylated by PrmB.

Functionally, one of the primary rRNA binding proteins, it binds directly near the 3'-end of the 23S rRNA, where it nucleates assembly of the 50S subunit. The sequence is that of Large ribosomal subunit protein uL3 from Parvibaculum lavamentivorans (strain DS-1 / DSM 13023 / NCIMB 13966).